The chain runs to 180 residues: Large ribosomal subunit protein uL5 (180 aa).

This sequence belongs to the universal ribosomal protein uL5 family. As to quaternary structure, part of the 50S ribosomal subunit; part of the 5S rRNA/L5/L18/L25 subcomplex. Contacts the 5S rRNA and the P site tRNA. Forms a bridge to the 30S subunit in the 70S ribosome.

In terms of biological role, this is one of the proteins that bind and probably mediate the attachment of the 5S RNA into the large ribosomal subunit, where it forms part of the central protuberance. In the 70S ribosome it contacts protein S13 of the 30S subunit (bridge B1b), connecting the 2 subunits; this bridge is implicated in subunit movement. Contacts the P site tRNA; the 5S rRNA and some of its associated proteins might help stabilize positioning of ribosome-bound tRNAs. The chain is Large ribosomal subunit protein uL5 from Streptococcus agalactiae serotype Ia (strain ATCC 27591 / A909 / CDC SS700).